The following is a 451-amino-acid chain: DNA double-strand break repair protein Mre11 (451 aa).

Mn(2+) is bound by residues aspartate 8, histidine 10, aspartate 49, and asparagine 84. Histidine 85 serves as the catalytic Proton donor. Mn(2+) is bound by residues histidine 168, histidine 198, and histidine 200. A disordered region spans residues 374 to 451 (REDNPPDLGD…GRPSLDRWIG (78 aa)). The span at 396–416 (GSEESSEEPEESDGEEVGLEV) shows a compositional bias: acidic residues.

It belongs to the MRE11/RAD32 family. In terms of assembly, homodimer. Forms a heterotetramer composed of two Mre11 subunits and two Rad50 subunits. The cofactor is Mn(2+).

With respect to regulation, nuclease activity is regulated by Rad50. Functionally, part of the Rad50/Mre11 complex, which is involved in the early steps of DNA double-strand break (DSB) repair. The complex may facilitate opening of the processed DNA ends to aid in the recruitment of HerA and NurA. Mre11 binds to DSB ends and has both double-stranded 3'-5' exonuclease activity and single-stranded endonuclease activity. This chain is DNA double-strand break repair protein Mre11, found in Methanopyrus kandleri (strain AV19 / DSM 6324 / JCM 9639 / NBRC 100938).